Reading from the N-terminus, the 408-residue chain is Glutamate N-acetyltransferase (408 aa).

Substrate is bound by residues Thr-150, Lys-176, Thr-189, Glu-271, Asn-403, and Thr-408. Thr-189 acts as the Nucleophile in catalysis.

It belongs to the ArgJ family. In terms of assembly, heterotetramer of two alpha and two beta chains.

It is found in the cytoplasm. It carries out the reaction N(2)-acetyl-L-ornithine + L-glutamate = N-acetyl-L-glutamate + L-ornithine. It functions in the pathway amino-acid biosynthesis; L-arginine biosynthesis; L-ornithine and N-acetyl-L-glutamate from L-glutamate and N(2)-acetyl-L-ornithine (cyclic): step 1/1. Its function is as follows. Catalyzes the transfer of the acetyl group from N(2)-acetylornithine to glutamate, forming N-acetylglutamate and L-ornithine. The protein is Glutamate N-acetyltransferase of Methanococcus maripaludis (strain DSM 14266 / JCM 13030 / NBRC 101832 / S2 / LL).